The primary structure comprises 132 residues: Aspartate 1-decarboxylase (132 aa).

S25 serves as the catalytic Schiff-base intermediate with substrate; via pyruvic acid. S25 is subject to Pyruvic acid (Ser). T57 serves as a coordination point for substrate. Residue Y58 is the Proton donor of the active site. 73-75 (GAA) lines the substrate pocket.

Belongs to the PanD family. Heterooctamer of four alpha and four beta subunits. Pyruvate is required as a cofactor. In terms of processing, is synthesized initially as an inactive proenzyme, which is activated by self-cleavage at a specific serine bond to produce a beta-subunit with a hydroxyl group at its C-terminus and an alpha-subunit with a pyruvoyl group at its N-terminus.

Its subcellular location is the cytoplasm. The catalysed reaction is L-aspartate + H(+) = beta-alanine + CO2. The protein operates within cofactor biosynthesis; (R)-pantothenate biosynthesis; beta-alanine from L-aspartate: step 1/1. Functionally, catalyzes the pyruvoyl-dependent decarboxylation of aspartate to produce beta-alanine. The chain is Aspartate 1-decarboxylase from Geotalea uraniireducens (strain Rf4) (Geobacter uraniireducens).